We begin with the raw amino-acid sequence, 274 residues long: Undecaprenyl-diphosphatase (274 aa).

Transmembrane regions (helical) follow at residues 1–21 (MDWLYSLIYGIVEGITEFLPI), 42–62 (VKDTFEVVIQGGAILAVLVYY), 81–101 (LWLGVVLACIPAVILGVLFGD), 107–127 (LFRPSVVAWALIVGGVLMWLL), 142–162 (ISAGKALAIGAAQCLALLWPG), 184–204 (TKFSFYLGVPTLGGAALLDFI), 213–233 (IGVVNVAIGAVTSFVVAYFAI), and 248–268 (FAVYRVVVGVLILVLIARGVL).

The protein belongs to the UppP family.

The protein resides in the cell membrane. The catalysed reaction is di-trans,octa-cis-undecaprenyl diphosphate + H2O = di-trans,octa-cis-undecaprenyl phosphate + phosphate + H(+). Its function is as follows. Catalyzes the dephosphorylation of undecaprenyl diphosphate (UPP). Confers resistance to bacitracin. The sequence is that of Undecaprenyl-diphosphatase from Deinococcus radiodurans (strain ATCC 13939 / DSM 20539 / JCM 16871 / CCUG 27074 / LMG 4051 / NBRC 15346 / NCIMB 9279 / VKM B-1422 / R1).